Consider the following 219-residue polypeptide: GTP-binding protein Rit1 (219 aa).

GTP contacts are provided by residues 28–35 (GAGGVGKS), 75–79 (DTAGQ), and 134–137 (NKSD).

It belongs to the small GTPase superfamily. Ras family. As to quaternary structure, interacts with AFDN, the C-terminal domain of RALGDS and RLF, but not with RIN1 and PIK3CA. RLF binds exclusively to the active GTP-bound form. Strongly interacts with BRAF, but only weakly with RAF1. BARF and RAF1 association is dependent upon the GTP-bound state. Interacts with RGL3. Expressed in many tissues.

Its subcellular location is the cell membrane. It carries out the reaction GTP + H2O = GDP + phosphate + H(+). With respect to regulation, alternates between an inactive form bound to GDP and an active form bound to GTP. Its function is as follows. Plays a crucial role in coupling NGF stimulation to the activation of both EPHB2 and MAPK14 signaling pathways and in NGF-dependent neuronal differentiation. Involved in ELK1 transactivation through the Ras-MAPK signaling cascade that mediates a wide variety of cellular functions, including cell proliferation, survival, and differentiation. In Mus musculus (Mouse), this protein is GTP-binding protein Rit1 (Rit1).